Consider the following 176-residue polypeptide: Endoribonuclease YbeY (176 aa).

Residues His-139, His-143, and His-149 each coordinate Zn(2+).

Belongs to the endoribonuclease YbeY family. Zn(2+) is required as a cofactor.

The protein resides in the cytoplasm. In terms of biological role, single strand-specific metallo-endoribonuclease involved in late-stage 70S ribosome quality control and in maturation of the 3' terminus of the 16S rRNA. This is Endoribonuclease YbeY from Acaryochloris marina (strain MBIC 11017).